Here is an 828-residue protein sequence, read N- to C-terminus: Protein kintoun (828 aa).

Disordered stretches follow at residues 1-31 (MSGS…DEPI), 223-250 (KNPT…EGEP), 383-424 (DSGV…PTSN), 556-668 (APVQ…HRGI), and 741-828 (KKNQ…EDLI). A compositionally biased stretch (basic residues) spans 9–22 (RNKHSKGNLKHNNN). A Phosphoserine modification is found at serine 384. Positions 395–414 (PVEEEEDGEDEIEAEEEEEE) are enriched in acidic residues. Basic and acidic residues predominate over residues 556–573 (APVQEDKPGDIQFKRNDQ). A compositionally biased stretch (acidic residues) spans 591–601 (EREEGEIEEAE). Over residues 606–620 (KKSASKKQRGKRNKK) the composition is skewed to basic residues. Polar residues predominate over residues 625–641 (SESACVSLPTSVDSQPM). A compositionally biased stretch (basic residues) spans 741–755 (KKNQKRRDCKLRAQQ). Serine 759 carries the phosphoserine modification. Residues 788–808 (DSGLDLTRHNKKRELAEEADN) are compositionally biased toward basic and acidic residues. Residues 815–828 (EMDDDDDDEDEDLI) show a composition bias toward acidic residues.

Belongs to the PIH1 family. Kintoun subfamily. In terms of assembly, interacts with Pp1alpha-96A, Pp1-87B, Pp1-13C and flw.

Its subcellular location is the cytoplasm. Required for cytoplasmic pre-assembly of axonemal dyneins, thereby playing a central role in motility in cilia and flagella. Involved in pre-assembly of dynein arm complexes in the cytoplasm before intraflagellar transport loads them for the ciliary compartment. This Drosophila willistoni (Fruit fly) protein is Protein kintoun.